Reading from the N-terminus, the 818-residue chain is Glycerol-3-phosphate acyltransferase (818 aa).

An HXXXXD motif motif is present at residues 305-310 (HRSHMD).

It belongs to the GPAT/DAPAT family.

The protein localises to the cell inner membrane. The enzyme catalyses sn-glycerol 3-phosphate + an acyl-CoA = a 1-acyl-sn-glycero-3-phosphate + CoA. The protein operates within phospholipid metabolism; CDP-diacylglycerol biosynthesis; CDP-diacylglycerol from sn-glycerol 3-phosphate: step 1/3. This chain is Glycerol-3-phosphate acyltransferase, found in Photorhabdus laumondii subsp. laumondii (strain DSM 15139 / CIP 105565 / TT01) (Photorhabdus luminescens subsp. laumondii).